A 273-amino-acid polypeptide reads, in one-letter code: Undecaprenyl-diphosphatase (273 aa).

Transmembrane regions (helical) follow at residues Ser-6–Ser-26, Ala-45–Trp-65, Leu-90–His-110, Leu-116–Ala-136, Tyr-190–Leu-210, Ala-222–Ile-242, and Ile-252–Phe-272.

Belongs to the UppP family.

It localises to the cell inner membrane. It catalyses the reaction di-trans,octa-cis-undecaprenyl diphosphate + H2O = di-trans,octa-cis-undecaprenyl phosphate + phosphate + H(+). Catalyzes the dephosphorylation of undecaprenyl diphosphate (UPP). Confers resistance to bacitracin. This Salmonella arizonae (strain ATCC BAA-731 / CDC346-86 / RSK2980) protein is Undecaprenyl-diphosphatase.